The sequence spans 273 residues: MAPRRPYWRGYLKLSLVTCPVAMTPATSESEKVRFHTLNKDTGNRVVSHYVDSVTGKPVKDEQEAKGYERGENDYVLLTDEDLESVELETVRTIDIEKFIPRGSIEWVYLETPFYLTANDKIGDEAFAVIRQAMEAEDVVGVSRVVLGRRERAVVLEPRGEGIVVWTLRFGDEVRPESEYFTGIEKKSDAKGVSAVEAVIKKRMQDWSPEMVSDPIQESLLKLIADKKKAKKPSKAKASKSTKGDDEEKSNVVNIMDALKKSVAKELKSRKAG.

In terms of domain architecture, Ku spans 13-190; it reads KLSLVTCPVA…FTGIEKKSDA (178 aa). Positions 227-251 are disordered; sequence KKKAKKPSKAKASKSTKGDDEEKSN. Over residues 228–240 the composition is skewed to basic residues; it reads KKAKKPSKAKASK.

Belongs to the prokaryotic Ku family. Homodimer. Interacts with LigD.

With LigD forms a non-homologous end joining (NHEJ) DNA repair enzyme, which repairs dsDNA breaks with reduced fidelity. Binds linear dsDNA with 5'- and 3'- overhangs but not closed circular dsDNA nor ssDNA. Recruits and stimulates the ligase activity of LigD. This Allorhizobium ampelinum (strain ATCC BAA-846 / DSM 112012 / S4) (Agrobacterium vitis (strain S4)) protein is Non-homologous end joining protein Ku.